The sequence spans 464 residues: Glucose-6-phosphate isomerase (464 aa).

Residue E290 is the Proton donor of the active site. Active-site residues include H319 and K433.

It belongs to the GPI family.

The protein resides in the cytoplasm. It catalyses the reaction alpha-D-glucose 6-phosphate = beta-D-fructose 6-phosphate. It functions in the pathway carbohydrate biosynthesis; gluconeogenesis. The protein operates within carbohydrate degradation; glycolysis; D-glyceraldehyde 3-phosphate and glycerone phosphate from D-glucose: step 2/4. Catalyzes the reversible isomerization of glucose-6-phosphate to fructose-6-phosphate. This chain is Glucose-6-phosphate isomerase, found in Carboxydothermus hydrogenoformans (strain ATCC BAA-161 / DSM 6008 / Z-2901).